We begin with the raw amino-acid sequence, 318 residues long: Petal death protein (318 aa).

A propeptide spans 1 to 3 (MAP) (removed in mature form). The disordered stretch occupies residues 1–24 (MAPPNGTTNGETEVATQGSYTAVS). 3 residues coordinate Mg(2+): D107, D109, and K142.

Belongs to the isocitrate lyase/PEP mutase superfamily. Homodimer and homotetramer formed by a dimer of homodimer. The cofactor is Mg(2+). It depends on Mn(2+) as a cofactor. Fe(2+) is required as a cofactor. Co(2+) serves as cofactor. In terms of tissue distribution, accumulates in senescing flower petals.

It catalyses the reaction oxaloacetate + H2O = oxalate + acetate + H(+). In terms of biological role, catalyzes cleavage of the C(2)-C(3) bond in oxaloacetate and in (2R)-alkyl malate derivatives to form oxalate and acetate, and alkyl carboxylates and R-ketocarboxylates, respectively. The polypeptide is Petal death protein (Dianthus caryophyllus (Carnation)).